Consider the following 257-residue polypeptide: Imidazole glycerol phosphate synthase subunit HisF (257 aa).

Residues Asp12 and Asp131 contribute to the active site.

The protein belongs to the HisA/HisF family. As to quaternary structure, heterodimer of HisH and HisF.

It is found in the cytoplasm. It carries out the reaction 5-[(5-phospho-1-deoxy-D-ribulos-1-ylimino)methylamino]-1-(5-phospho-beta-D-ribosyl)imidazole-4-carboxamide + L-glutamine = D-erythro-1-(imidazol-4-yl)glycerol 3-phosphate + 5-amino-1-(5-phospho-beta-D-ribosyl)imidazole-4-carboxamide + L-glutamate + H(+). It functions in the pathway amino-acid biosynthesis; L-histidine biosynthesis; L-histidine from 5-phospho-alpha-D-ribose 1-diphosphate: step 5/9. Its function is as follows. IGPS catalyzes the conversion of PRFAR and glutamine to IGP, AICAR and glutamate. The HisF subunit catalyzes the cyclization activity that produces IGP and AICAR from PRFAR using the ammonia provided by the HisH subunit. The sequence is that of Imidazole glycerol phosphate synthase subunit HisF from Hydrogenovibrio crunogenus (strain DSM 25203 / XCL-2) (Thiomicrospira crunogena).